The sequence spans 289 residues: MEPIWRNYPYPTYPGHHNFQFDPLLSDGSHTGVNQLGGVFVNGRPLADTVRAQIVEMSQHGTRPCDISRQLKVSHGCVSKILGRYYSTGSVRPGVIGGSKPKVATPRVVECIAGYKRANPTMFAWEIRQKLIEDQICGEENVPSVSSINRIVRNKSFMAQLAAPTSVTSSAARPSSATSHHQRSPPRGVQQHMQQSTSVQQLQQLQLTSAATVNSLMTPPAFAMPGTAYSINGLLGTLPQPSLLDDKFTNLSTQSADMSLVYSTGLVGEHDWTMRTPMVILPQNYCGQL.

Positions 29-155 (SHTGVNQLGG…SSINRIVRNK (127 aa)) form a DNA-binding region, paired. The segment at 32 to 88 (GVNQLGGVFVNGRPLADTVRAQIVEMSQHGTRPCDISRQLKVSHGCVSKILGRYYST) is PAI subdomain. Residues 107–155 (RVVECIAGYKRANPTMFAWEIRQKLIEDQICGEENVPSVSSINRIVRNK) are RED subdomain. Low complexity-rich tracts occupy residues 166–179 (SVTS…SATS) and 189–198 (VQQHMQQSTS). The tract at residues 166–198 (SVTSSAARPSSATSHHQRSPPRGVQQHMQQSTS) is disordered.

Its subcellular location is the nucleus. It localises to the chromosome. Transcription factor. Binds to specific DNA sequence motifs in regulatory elements, for example in the genes encoding transcription factor lin-48, apoptosis regulator ced-9 and neuropeptide-like protein nlp-2. Specifies cell fate, playing an essential role in embryonic and larval development. Involved in morphogenesis of the vulva and uterus in hermaphrodites and of the rectal epithelium of the tail in males. Plays multiple roles in the development of the egg-laying system, acting in both lin-3/EGF-pathway-dependent and -independent processes. Positively regulates expression of neuropeptide-like proteins nlp-2 and nlp-7 in uvl cells in an EGF-pathway-dependent manner. Involved in negatively modulating apoptosis in germline and somatic cells, acting in partial redundancy with transcription factor pax-2, probably by directly regulating transcription of ced-9. Positively regulates transcription of lin-48 in hindgut cells and functions in the development of the hindgut. This chain is Paired box protein 5 homolog, found in Caenorhabditis elegans.